Reading from the N-terminus, the 241-residue chain is Small ribosomal subunit protein uS3 (241 aa).

In terms of domain architecture, KH type-2 spans 39 to 107 (IRTYLKKELY…PLSVNIKEEK (69 aa)). The segment at 214–241 (AEVKEEQQKEGARRPKRAPKRENSGKAE) is disordered. Basic and acidic residues predominate over residues 215 to 226 (EVKEEQQKEGAR).

It belongs to the universal ribosomal protein uS3 family. In terms of assembly, part of the 30S ribosomal subunit. Forms a tight complex with proteins S10 and S14.

Binds the lower part of the 30S subunit head. Binds mRNA in the 70S ribosome, positioning it for translation. The sequence is that of Small ribosomal subunit protein uS3 from Sulfurimonas denitrificans (strain ATCC 33889 / DSM 1251) (Thiomicrospira denitrificans (strain ATCC 33889 / DSM 1251)).